A 534-amino-acid chain; its full sequence is Beta-1,2-xylosyltransferase (534 aa).

The Cytoplasmic portion of the chain corresponds to 1-11 (MSKRNPKILKI). Residues 12–34 (FLYMLLLNSLFLIIYFVFHSSSF) form a helical; Signal-anchor for type II membrane protein membrane-spanning segment. At 35–534 (SPEQSQPPHI…LTEIMKSLGC (500 aa)) the chain is on the lumenal side. N-linked (GlcNAc...) asparagine glycans are attached at residues asparagine 51, asparagine 301, and asparagine 479.

Glycosylation at least at one of the two sites Asn-51 and Asn-301 is necessary for enzyme stability and activity.

Its subcellular location is the golgi apparatus membrane. The catalysed reaction is N(4)-{beta-D-GlcNAc-(1-&gt;2)-alpha-D-Man-(1-&gt;3)-[beta-D-GlcNAc-(1-&gt;2)-alpha-D-Man-(1-&gt;6)]-beta-D-Man-(1-&gt;4)-beta-D-GlcNAc-(1-&gt;4)-beta-D-GlcNAc}-L-asparaginyl-[protein] + UDP-alpha-D-xylose = N(4)-{beta-D-GlcNAc-(1-&gt;2)-alpha-D-Man-(1-&gt;3)-[beta-D-GlcNAc-(1-&gt;2)-alpha-D-Man-(1-&gt;6)]-[beta-D-Xyl-(1-&gt;2)]-beta-D-Man-(1-&gt;4)-beta-D-GlcNAc-(1-&gt;4)-beta-D-GlcNAc}-L-asparaginyl-[protein] + UDP + H(+). Its pathway is protein modification; protein glycosylation. Functionally, glycosyltransferase involved in the xylosylation of N-glycans. Possesses beta-1,2-xylosyltransferase activity, transferring xylose from UDP-xylose to the core beta-linked mannose of N-glycans. Involved in the biosynthesis of glycoprotein bound N-glycans. Does not require metal ions for its activity. The polypeptide is Beta-1,2-xylosyltransferase (Arabidopsis thaliana (Mouse-ear cress)).